Reading from the N-terminus, the 262-residue chain is Thiamine thiazole synthase (262 aa).

NAD(+) is bound by residues alanine 36, 55–56, glycine 63, valine 127, and 154–156; these read EK and HVD. Fe cation-binding residues include aspartate 156 and histidine 171. Position 224 (methionine 224) interacts with NAD(+). Arginine 234 lines the glycine pocket.

The protein belongs to the THI4 family. Homooctamer; tetramer of dimers. The cofactor is Fe(2+).

It catalyses the reaction hydrogen sulfide + glycine + NAD(+) = ADP-5-ethyl-4-methylthiazole-2-carboxylate + nicotinamide + 3 H2O + H(+). Its pathway is cofactor biosynthesis; thiamine diphosphate biosynthesis. Its function is as follows. Involved in the biosynthesis of the thiazole moiety of thiamine. Catalyzes the conversion of NAD and glycine to adenosine diphosphate 5-(2-hydroxyethyl)-4-methylthiazole-2-carboxylate (ADT), an adenylated thiazole intermediate, using free sulfide as a source of sulfur. The sequence is that of Thiamine thiazole synthase from Methanothrix thermoacetophila (strain DSM 6194 / JCM 14653 / NBRC 101360 / PT) (Methanosaeta thermophila).